A 114-amino-acid chain; its full sequence is NADH dehydrogenase [ubiquinone] 1 subunit C2, isoform 2 (114 aa).

Residues 56 to 75 (GLHRQLLYITAFFFAGYYLV) traverse the membrane as a helical segment.

Belongs to the complex I NDUFC2 subunit family. Complex I is composed of 45 different subunits.

The protein resides in the mitochondrion inner membrane. Its function is as follows. Accessory subunit of the mitochondrial membrane respiratory chain NADH dehydrogenase (Complex I), that is believed not to be involved in catalysis. Complex I functions in the transfer of electrons from NADH to the respiratory chain. The immediate electron acceptor for the enzyme is believed to be ubiquinone. The chain is NADH dehydrogenase [ubiquinone] 1 subunit C2, isoform 2 (NDUFC2-KCTD14) from Homo sapiens (Human).